A 450-amino-acid polypeptide reads, in one-letter code: Phosphoglucosamine mutase (450 aa).

The active-site Phosphoserine intermediate is Ser-101. Residues Ser-101, Asp-240, Asp-242, and Asp-244 each contribute to the Mg(2+) site. Ser-101 carries the post-translational modification Phosphoserine.

Belongs to the phosphohexose mutase family. Mg(2+) serves as cofactor. Post-translationally, activated by phosphorylation.

The catalysed reaction is alpha-D-glucosamine 1-phosphate = D-glucosamine 6-phosphate. In terms of biological role, catalyzes the conversion of glucosamine-6-phosphate to glucosamine-1-phosphate. This is Phosphoglucosamine mutase from Streptococcus thermophilus (strain ATCC BAA-250 / LMG 18311).